Here is a 235-residue protein sequence, read N- to C-terminus: Adenosine 5'-phosphosulfate reductase (235 aa).

[4Fe-4S] cluster is bound by residues Cys121, Cys122, Cys204, and Cys207. Cys230 (nucleophile; cysteine thiosulfonate intermediate) is an active-site residue.

This sequence belongs to the PAPS reductase family. CysH subfamily. The cofactor is [4Fe-4S] cluster.

The protein localises to the cytoplasm. It carries out the reaction [thioredoxin]-disulfide + sulfite + AMP + 2 H(+) = adenosine 5'-phosphosulfate + [thioredoxin]-dithiol. It functions in the pathway sulfur metabolism; hydrogen sulfide biosynthesis; sulfite from sulfate. Its function is as follows. Catalyzes the formation of sulfite from adenosine 5'-phosphosulfate (APS) using thioredoxin as an electron donor. This chain is Adenosine 5'-phosphosulfate reductase, found in Geobacillus thermodenitrificans (strain NG80-2).